Reading from the N-terminus, the 885-residue chain is Chitobiase (885 aa).

Positions 1 to 27 (MNAFKLSALARLTATMGFLGGMGSAMA) are cleaved as a signal peptide. Disulfide bonds link Cys-56–Cys-66, Cys-400–Cys-408, and Cys-505–Cys-578. Catalysis depends on Glu-540, which acts as the Proton donor. The segment at 866–885 (EVQVRSVSPDGKRYSRAEKV) is disordered. A compositionally biased stretch (basic and acidic residues) spans 875–885 (DGKRYSRAEKV).

This sequence belongs to the glycosyl hydrolase 20 family. Monomer.

The protein localises to the periplasm. The enzyme catalyses Hydrolysis of terminal non-reducing N-acetyl-D-hexosamine residues in N-acetyl-beta-D-hexosaminides.. The protein operates within glycan degradation; chitin degradation. In terms of biological role, digests the beta-1,4-glycosidic bonds in N-acetylglucosamine (GlcNAc) oligomers (mainly dimers). The chain is Chitobiase (chb) from Serratia marcescens.